Here is a 336-residue protein sequence, read N- to C-terminus: Foldase protein PrsA (336 aa).

A signal peptide spans 1–22 (MKSAKKLLSVLCLGIFILTFTA). The N-palmitoyl cysteine moiety is linked to residue C23. A lipid anchor (S-diacylglycerol cysteine) is attached at C23. Residues 194 to 286 (PNTMNVSHIL…WGYHIIKINS (93 aa)) enclose the PpiC domain.

The protein belongs to the PrsA family.

The protein resides in the cell membrane. The enzyme catalyses [protein]-peptidylproline (omega=180) = [protein]-peptidylproline (omega=0). In terms of biological role, plays a major role in protein secretion by helping the post-translocational extracellular folding of several secreted proteins. The sequence is that of Foldase protein PrsA from Clostridium botulinum (strain Langeland / NCTC 10281 / Type F).